The chain runs to 59 residues: Large ribosomal subunit protein uL30 (59 aa).

This sequence belongs to the universal ribosomal protein uL30 family. Part of the 50S ribosomal subunit.

In Bacillus licheniformis (strain ATCC 14580 / DSM 13 / JCM 2505 / CCUG 7422 / NBRC 12200 / NCIMB 9375 / NCTC 10341 / NRRL NRS-1264 / Gibson 46), this protein is Large ribosomal subunit protein uL30.